Reading from the N-terminus, the 242-residue chain is 1-(5-phosphoribosyl)-5-[(5-phosphoribosylamino)methylideneamino] imidazole-4-carboxamide isomerase (242 aa).

Catalysis depends on Asp10, which acts as the Proton acceptor. The Proton donor role is filled by Asp131.

This sequence belongs to the HisA/HisF family.

The protein localises to the cytoplasm. The enzyme catalyses 1-(5-phospho-beta-D-ribosyl)-5-[(5-phospho-beta-D-ribosylamino)methylideneamino]imidazole-4-carboxamide = 5-[(5-phospho-1-deoxy-D-ribulos-1-ylimino)methylamino]-1-(5-phospho-beta-D-ribosyl)imidazole-4-carboxamide. The protein operates within amino-acid biosynthesis; L-histidine biosynthesis; L-histidine from 5-phospho-alpha-D-ribose 1-diphosphate: step 4/9. In Bifidobacterium animalis subsp. lactis (strain AD011), this protein is 1-(5-phosphoribosyl)-5-[(5-phosphoribosylamino)methylideneamino] imidazole-4-carboxamide isomerase.